Here is a 263-residue protein sequence, read N- to C-terminus: Oxygen-evolving enhancer protein 2-1, chloroplastic (263 aa).

S153 carries the post-translational modification Phosphoserine.

Belongs to the PsbP family. As to quaternary structure, interacts with WAK1.

It localises to the plastid. The protein localises to the chloroplast thylakoid lumen. In terms of biological role, may be involved in the regulation of photosystem II. The sequence is that of Oxygen-evolving enhancer protein 2-1, chloroplastic (PSBP1) from Arabidopsis thaliana (Mouse-ear cress).